We begin with the raw amino-acid sequence, 1005 residues long: Translation initiation factor IF-2 (1005 aa).

2 disordered regions span residues 54–337 (KYVP…RRPQ) and 368–414 (PKPK…PTSV). A compositionally biased stretch (polar residues) spans 58–73 (SPSTHSMPPTRPTSHS). Over residues 75 to 86 (PLPPQPGKPQPK) the composition is skewed to pro residues. The segment covering 146–157 (GSNSPSHSESTP) has biased composition (polar residues). Composition is skewed to low complexity over residues 189-198 (PSPAAMAGRA) and 222-240 (VESAPVATATPAPASPRAE). Residues 258–274 (PRSETSEDGARRGEKLV) are compositionally biased toward basic and acidic residues. Over residues 392-401 (GGRKLSRRDR) the composition is skewed to basic residues. The tr-type G domain maps to 495–668 (RRPPVVTIMG…LLVSEVEDLY (174 aa)). The segment at 504-511 (GHVDHGKT) is G1. A GTP-binding site is contributed by 504–511 (GHVDHGKT). The tract at residues 529 to 533 (GITQH) is G2. The G3 stretch occupies residues 554–557 (DTPG). GTP-binding positions include 554-558 (DTPGH) and 608-611 (NKID). Residues 608 to 611 (NKID) form a G4 region. A G5 region spans residues 644–646 (SAI).

Belongs to the TRAFAC class translation factor GTPase superfamily. Classic translation factor GTPase family. IF-2 subfamily.

It localises to the cytoplasm. In terms of biological role, one of the essential components for the initiation of protein synthesis. Protects formylmethionyl-tRNA from spontaneous hydrolysis and promotes its binding to the 30S ribosomal subunits. Also involved in the hydrolysis of GTP during the formation of the 70S ribosomal complex. In Cyanothece sp. (strain PCC 7425 / ATCC 29141), this protein is Translation initiation factor IF-2.